A 359-amino-acid polypeptide reads, in one-letter code: Histidinol-phosphate aminotransferase (359 aa).

N6-(pyridoxal phosphate)lysine is present on lysine 220.

It belongs to the class-II pyridoxal-phosphate-dependent aminotransferase family. Histidinol-phosphate aminotransferase subfamily. Homodimer. Requires pyridoxal 5'-phosphate as cofactor.

It carries out the reaction L-histidinol phosphate + 2-oxoglutarate = 3-(imidazol-4-yl)-2-oxopropyl phosphate + L-glutamate. Its pathway is amino-acid biosynthesis; L-histidine biosynthesis; L-histidine from 5-phospho-alpha-D-ribose 1-diphosphate: step 7/9. This chain is Histidinol-phosphate aminotransferase, found in Neisseria gonorrhoeae (strain ATCC 700825 / FA 1090).